The chain runs to 256 residues: 5'-nucleotidase SurE (256 aa).

Residues aspartate 8, aspartate 9, serine 40, and asparagine 92 each contribute to the a divalent metal cation site.

This sequence belongs to the SurE nucleotidase family. A divalent metal cation is required as a cofactor.

The protein resides in the cytoplasm. The enzyme catalyses a ribonucleoside 5'-phosphate + H2O = a ribonucleoside + phosphate. Nucleotidase that shows phosphatase activity on nucleoside 5'-monophosphates. This is 5'-nucleotidase SurE from Allorhizobium ampelinum (strain ATCC BAA-846 / DSM 112012 / S4) (Agrobacterium vitis (strain S4)).